A 1707-amino-acid chain; its full sequence is Chromatin-remodeling ATPase INO80 (1707 aa).

5 disordered regions span residues 1 to 156 (MTGG…IGGN), 178 to 314 (QKPA…TMSE), 410 to 580 (QDEK…PLSA), 627 to 649 (ASKQ…QARA), and 722 to 748 (DASG…TIDL). Over residues 7–16 (YNSQSPTQQP) the composition is skewed to polar residues. Over residues 42-55 (PQTPPAFPPQPPLA) the composition is skewed to pro residues. Composition is skewed to polar residues over residues 86–99 (SSSQ…SGTP) and 110–124 (SVLS…NHPT). Composition is skewed to pro residues over residues 209-226 (LPEP…PVLA) and 235-249 (TPPP…PAPL). Composition is skewed to basic and acidic residues over residues 264-284 (RLEK…ESRA), 426-463 (ENTV…ERAQ), 524-535 (SKEQKQAEKDAA), 552-572 (PKED…RSKE), 633-647 (KWQE…DTQA), and 734-746 (ETVR…DHTI). Residues 395–478 (ANEASVIAEV…TKRALEGVTS (84 aa)) are a coiled coil. A DBINO domain is found at 593–718 (IWRDIARKDI…SHFIGRKIKG (126 aa)). Positions 635 to 706 (QERTNKSMKD…KLNFLISQTE (72 aa)) form a coiled coil. The 173-residue stretch at 847 to 1019 (VNLYEQGING…WALLHFIMPT (173 aa)) folds into the Helicase ATP-binding domain. Position 860 to 867 (860 to 867 (DEMGLGKT)) interacts with ATP. The DEAQ box motif lies at 970–973 (DEAQ). A Helicase C-terminal domain is found at 1423–1583 (KLDELLRELK…GVDFNTRNRE (161 aa)). The tract at residues 1643–1707 (EGNFDDISAK…LRLIDGDGGL (65 aa)) is disordered. Positions 1659–1673 (PVSTADNIATPSSTP) are enriched in polar residues. Over residues 1676–1692 (KRGRGRGTVKGSSKRAK) the composition is skewed to basic residues. The segment covering 1693-1707 (TTTERLRLIDGDGGL) has biased composition (basic and acidic residues).

The protein belongs to the SNF2/RAD54 helicase family. Component of the INO80 chromatin-remodeling complex.

Its subcellular location is the nucleus. It carries out the reaction ATP + H2O = ADP + phosphate + H(+). Functionally, ATPase component of the INO80 complex which remodels chromatin by shifting nucleosomes and is involved in DNA repair. In Aspergillus clavatus (strain ATCC 1007 / CBS 513.65 / DSM 816 / NCTC 3887 / NRRL 1 / QM 1276 / 107), this protein is Chromatin-remodeling ATPase INO80 (ino80).